Here is a 343-residue protein sequence, read N- to C-terminus: Fructose-bisphosphate aldolase (343 aa).

S53 is a D-glyceraldehyde 3-phosphate binding site. The Proton donor role is filled by D95. Residues H96, D131, E161, and H212 each contribute to the Zn(2+) site. G213 is a dihydroxyacetone phosphate binding site. H252 contributes to the Zn(2+) binding site. Dihydroxyacetone phosphate-binding positions include 253–255 (GGS) and 274–277 (NIDT).

The protein belongs to the class II fructose-bisphosphate aldolase family. It depends on Zn(2+) as a cofactor.

It carries out the reaction beta-D-fructose 1,6-bisphosphate = D-glyceraldehyde 3-phosphate + dihydroxyacetone phosphate. The protein operates within carbohydrate degradation; glycolysis; D-glyceraldehyde 3-phosphate and glycerone phosphate from D-glucose: step 4/4. Catalyzes the aldol condensation of dihydroxyacetone phosphate (DHAP or glycerone-phosphate) with glyceraldehyde 3-phosphate (G3P) to form fructose 1,6-bisphosphate (FBP) in gluconeogenesis and the reverse reaction in glycolysis. The sequence is that of Fructose-bisphosphate aldolase (fba) from Streptomyces coelicolor (strain ATCC BAA-471 / A3(2) / M145).